The primary structure comprises 354 residues: Lipoyl synthase, mitochondrial (354 aa).

[4Fe-4S] cluster is bound by residues cysteine 91, cysteine 96, cysteine 102, cysteine 122, cysteine 126, cysteine 129, and serine 337. A Radical SAM core domain is found at 107–326; sequence DDSLATATIM…AEYSKKLGFL (220 aa).

It belongs to the radical SAM superfamily. Lipoyl synthase family. [4Fe-4S] cluster serves as cofactor.

The protein resides in the mitochondrion. It catalyses the reaction [[Fe-S] cluster scaffold protein carrying a second [4Fe-4S](2+) cluster] + N(6)-octanoyl-L-lysyl-[protein] + 2 oxidized [2Fe-2S]-[ferredoxin] + 2 S-adenosyl-L-methionine + 4 H(+) = [[Fe-S] cluster scaffold protein] + N(6)-[(R)-dihydrolipoyl]-L-lysyl-[protein] + 4 Fe(3+) + 2 hydrogen sulfide + 2 5'-deoxyadenosine + 2 L-methionine + 2 reduced [2Fe-2S]-[ferredoxin]. The protein operates within protein modification; protein lipoylation via endogenous pathway; protein N(6)-(lipoyl)lysine from octanoyl-[acyl-carrier-protein]: step 2/2. Catalyzes the radical-mediated insertion of two sulfur atoms into the C-6 and C-8 positions of the octanoyl moiety bound to the lipoyl domains of lipoate-dependent enzymes, thereby converting the octanoylated domains into lipoylated derivatives. This Caenorhabditis elegans protein is Lipoyl synthase, mitochondrial.